Consider the following 180-residue polypeptide: Hypoxanthine-guanine phosphoribosyltransferase (180 aa).

K43 and G44 together coordinate diphosphate. Residues E99 and D100 each contribute to the Mg(2+) site. The active-site Proton acceptor is D103. GMP is bound by residues K131, 152–153 (FV), and D159. A diphosphate-binding site is contributed by R165.

Belongs to the purine/pyrimidine phosphoribosyltransferase family. Mg(2+) serves as cofactor.

The protein resides in the cytoplasm. It catalyses the reaction IMP + diphosphate = hypoxanthine + 5-phospho-alpha-D-ribose 1-diphosphate. The catalysed reaction is GMP + diphosphate = guanine + 5-phospho-alpha-D-ribose 1-diphosphate. Its pathway is purine metabolism; IMP biosynthesis via salvage pathway; IMP from hypoxanthine: step 1/1. It participates in purine metabolism; GMP biosynthesis via salvage pathway; GMP from guanine: step 1/1. Functionally, purine salvage pathway enzyme that catalyzes the transfer of the ribosyl-5-phosphate group from 5-phospho-alpha-D-ribose 1-diphosphate (PRPP) to the N9 position of the 6-oxopurines hypoxanthine and guanine to form the corresponding ribonucleotides IMP (inosine 5'-monophosphate) and GMP (guanosine 5'-monophosphate), with the release of PPi. In Bacillus subtilis (strain 168), this protein is Hypoxanthine-guanine phosphoribosyltransferase (hprT).